We begin with the raw amino-acid sequence, 369 residues long: Septin-5 (369 aa).

At threonine 13 the chain carries Phosphothreonine. A Septin-type G domain is found at 41–314; that stretch reads KGFDFTLMVA…ENYRAHCIQQ (274 aa). A G1 motif region spans residues 51 to 58; the sequence is GESGLGKS. GTP-binding positions include 51-58, threonine 85, and glycine 111; that span reads GESGLGKS. Residues 108-111 form a G3 motif region; sequence DTPG. Arginine 168 carries the post-translational modification Omega-N-methylarginine. A G4 motif region spans residues 189–192; the sequence is AKAD. 190–198 contributes to the GTP binding site; sequence KADCLVPSE. Serine 225 carries the post-translational modification Phosphoserine. 2 residues coordinate GTP: glycine 248 and arginine 263. A Phosphoserine modification is found at serine 327. Threonine 336 is subject to Phosphothreonine. Residues 338 to 369 adopt a coiled-coil conformation; that stretch reads DSETEKLIRMKDEELRRMQEMLQKMKQRMQDQ.

The protein belongs to the TRAFAC class TrmE-Era-EngA-EngB-Septin-like GTPase superfamily. Septin GTPase family. Septins polymerize into heterooligomeric protein complexes that form filaments, and can associate with cellular membranes, actin filaments and microtubules. GTPase activity is required for filament formation. Interacts with SEPTIN2 and SEPTIN5. In platelets, associated with a complex containing STX4. Interacts with PRKN; this interaction leads to SEPTIN5 ubiquitination and degradation. Interacts with DYRK1A. Interacts with STX1A; in the cerebellar cortex. Post-translationally, phosphorylated by DYRK1A. Expressed in brain and testis and at lower level in heart, spleen, lung and kidney.

The protein localises to the cytoplasm. It localises to the cytoskeleton. Filament-forming cytoskeletal GTPase. May play a role in cytokinesis (Potential). May play a role in platelet secretion. This chain is Septin-5, found in Rattus norvegicus (Rat).